Consider the following 723-residue polypeptide: Polyribonucleotide nucleotidyltransferase (723 aa).

2 residues coordinate Mg(2+): Asp-488 and Asp-494. Residues 555–614 (PRMITMKIHPDKIREVIGKGGSTIQALTKETGTTIDIQEDGTITIASTSTDGMAEAKRRI) form the KH domain. One can recognise an S1 motif domain in the interval 624–692 (GKIYAGTVLK…EKGRLRLSLK (69 aa)). The interval 701-723 (SISPINAGEAAAPAAPAEGSEQQ) is disordered. The segment covering 707–723 (AGEAAAPAAPAEGSEQQ) has biased composition (low complexity).

This sequence belongs to the polyribonucleotide nucleotidyltransferase family. Mg(2+) is required as a cofactor.

The protein resides in the cytoplasm. The enzyme catalyses RNA(n+1) + phosphate = RNA(n) + a ribonucleoside 5'-diphosphate. Involved in mRNA degradation. Catalyzes the phosphorolysis of single-stranded polyribonucleotides processively in the 3'- to 5'-direction. The chain is Polyribonucleotide nucleotidyltransferase from Cupriavidus necator (strain ATCC 17699 / DSM 428 / KCTC 22496 / NCIMB 10442 / H16 / Stanier 337) (Ralstonia eutropha).